The primary structure comprises 253 residues: Uridylate kinase (253 aa).

26-29 (KLSG) provides a ligand contact to ATP. Gly-68 is a UMP binding site. Positions 69 and 73 each coordinate ATP. UMP contacts are provided by residues Asp-88 and 149–156 (TGNPFFTT). Residues Thr-176, Tyr-182, and Asp-185 each contribute to the ATP site.

Belongs to the UMP kinase family. Homohexamer.

It localises to the cytoplasm. The catalysed reaction is UMP + ATP = UDP + ADP. It participates in pyrimidine metabolism; CTP biosynthesis via de novo pathway; UDP from UMP (UMPK route): step 1/1. With respect to regulation, inhibited by UTP. Functionally, catalyzes the reversible phosphorylation of UMP to UDP. This Chromohalobacter salexigens (strain ATCC BAA-138 / DSM 3043 / CIP 106854 / NCIMB 13768 / 1H11) protein is Uridylate kinase.